The following is a 409-amino-acid chain: MAAFLQTNISLNAIKIVPGKYSSLTDHQFRAPYRIRCAAASPGKKRYNIALLPGDGIGPEVISVAKNVLQKAGSLEGLEFDFKEMPVGGAALDLVGVPLPEETFTAAKLSDAILLGAIGGYKWDKNEKHLRPEMALFYLRRDLKVFANLRPATVLPQLVDASTLKKEVAEGVDMMIVRELTGGIYFGEPRGITINENGEEVGVSTEIYAAHEIDRIARVAFETARKRRGKLCSVDKANVLDASILWRKRVTALASEYPDVELSHMYVDNAAMQLIRDPKQFDTIVTNNIFGDILSDEASMITGSIGMLPSASLGESGPGLFEPIHGSAPDIAGQDKANPLATILSAAMLLKYGLGEEKAAKRIEDAVVDALNKGFRTGDIYSPGNKLVGCKEMGEEVLKSVESKVPATV.

The N-terminal 37 residues, 1 to 37 (MAAFLQTNISLNAIKIVPGKYSSLTDHQFRAPYRIRC), are a transit peptide targeting the chloroplast. Phosphoserine is present on serine 74. 118 to 133 (IGGYKWDKNEKHLRPE) serves as a coordination point for NAD(+). Substrate is bound by residues arginine 140, arginine 150, and arginine 178. Residue asparagine 238 coordinates NAD(+). A substrate-binding site is contributed by aspartate 268. Aspartate 268 provides a ligand contact to Mg(2+). Asparagine 269 lines the NAD(+) pocket. The Mg(2+) site is built by aspartate 292 and aspartate 296. Residue 322–338 (EPIHGSAPDIAGQDKAN) participates in NAD(+) binding.

This sequence belongs to the isocitrate and isopropylmalate dehydrogenases family. In terms of assembly, homodimer. Requires Mg(2+) as cofactor. Mn(2+) is required as a cofactor. As to expression, highly expressed in seedlings, leaves, stems and roots and, to a lower extent, in flowers, pollen and siliques.

Its subcellular location is the plastid. It is found in the chloroplast stroma. It catalyses the reaction (2R,3S)-3-isopropylmalate + NAD(+) = 4-methyl-2-oxopentanoate + CO2 + NADH. The protein operates within amino-acid biosynthesis; L-leucine biosynthesis; L-leucine from 3-methyl-2-oxobutanoate: step 3/4. It participates in secondary metabolite biosynthesis. With respect to regulation, regulated by a thiol-based redox modification; oxidation by CuCl(2) leads to a decreased activity. Functionally, involved in both glucosinolate and leucine biosynthesis; catalyzes the oxidative decarboxylation step in both leucine biosynthesis (primary metabolism) and methionine chain elongation of glucosinolates (specialized metabolism). Catalyzes the oxidation of 3-carboxy-2-hydroxy-4-methylpentanoate (3-isopropylmalate, 3-IPM) to 3-carboxy-4-methyl-2-oxopentanoate. The product decarboxylates to 4-methyl-2 oxopentanoate. Required during pollen development and involved in embryo sac development. More active on 3-isopropylmalate and NAD(+) than towards D-malate. The chain is 3-isopropylmalate dehydrogenase 1, chloroplastic from Arabidopsis thaliana (Mouse-ear cress).